The sequence spans 954 residues: Glycine dehydrogenase (decarboxylating) (954 aa).

N6-(pyridoxal phosphate)lysine is present on K704.

The protein belongs to the GcvP family. In terms of assembly, the glycine cleavage system is composed of four proteins: P, T, L and H. Pyridoxal 5'-phosphate serves as cofactor.

It carries out the reaction N(6)-[(R)-lipoyl]-L-lysyl-[glycine-cleavage complex H protein] + glycine + H(+) = N(6)-[(R)-S(8)-aminomethyldihydrolipoyl]-L-lysyl-[glycine-cleavage complex H protein] + CO2. The glycine cleavage system catalyzes the degradation of glycine. The P protein binds the alpha-amino group of glycine through its pyridoxal phosphate cofactor; CO(2) is released and the remaining methylamine moiety is then transferred to the lipoamide cofactor of the H protein. This Vibrio parahaemolyticus serotype O3:K6 (strain RIMD 2210633) protein is Glycine dehydrogenase (decarboxylating).